The sequence spans 564 residues: Sulfite reductase [NADPH] hemoprotein beta-component 1 (564 aa).

Positions 426, 432, 471, and 475 each coordinate [4Fe-4S] cluster. Cysteine 475 is a binding site for siroheme.

This sequence belongs to the nitrite and sulfite reductase 4Fe-4S domain family. Alpha(8)-beta(8). The alpha component is a flavoprotein, the beta component is a hemoprotein. Siroheme serves as cofactor. Requires [4Fe-4S] cluster as cofactor.

The enzyme catalyses hydrogen sulfide + 3 NADP(+) + 3 H2O = sulfite + 3 NADPH + 4 H(+). It participates in sulfur metabolism; hydrogen sulfide biosynthesis; hydrogen sulfide from sulfite (NADPH route): step 1/1. Component of the sulfite reductase complex that catalyzes the 6-electron reduction of sulfite to sulfide. This is one of several activities required for the biosynthesis of L-cysteine from sulfate. The chain is Sulfite reductase [NADPH] hemoprotein beta-component 1 from Pectobacterium carotovorum subsp. carotovorum (strain PC1).